Here is a 211-residue protein sequence, read N- to C-terminus: FMN-dependent NADH:quinone oxidoreductase 2 (211 aa).

An FMN-binding site is contributed by 17–19 (SYS).

Belongs to the azoreductase type 1 family. Homodimer. The cofactor is FMN.

The catalysed reaction is 2 a quinone + NADH + H(+) = 2 a 1,4-benzosemiquinone + NAD(+). The enzyme catalyses N,N-dimethyl-1,4-phenylenediamine + anthranilate + 2 NAD(+) = 2-(4-dimethylaminophenyl)diazenylbenzoate + 2 NADH + 2 H(+). With respect to regulation, strongly inhibited by Pb(2+) and weakly inhibited by Cu(2+), Hg(2+) and Fe(2+). Stable in presence of Ag(+). In terms of biological role, quinone reductase that provides resistance to thiol-specific stress caused by electrophilic quinones. Contributes to resistance to 2-methylhydroquinone (2-MHQ) and catechol. Exhibits NADH-dependent 2,6-dichloroindophenol (DCIP) oxidoreductase activity. Its function is as follows. Also exhibits azoreductase activity. Catalyzes the reductive cleavage of the azo bond in aromatic azo compounds to the corresponding amines. Can reduce methyl red. The sequence is that of FMN-dependent NADH:quinone oxidoreductase 2 from Bacillus subtilis (strain 168).